The primary structure comprises 318 residues: Small ribosomal subunit protein uS2 (318 aa).

This sequence belongs to the universal ribosomal protein uS2 family.

In Mesomycoplasma hyopneumoniae (strain J / ATCC 25934 / NCTC 10110) (Mycoplasma hyopneumoniae), this protein is Small ribosomal subunit protein uS2.